An 883-amino-acid polypeptide reads, in one-letter code: Valine--tRNA ligase (883 aa).

The 'HIGH' region motif lies at 46 to 56 (PNVTGKLHLGH). The 'KMSKS' region motif lies at 520–524 (KMSKS). Lys-523 serves as a coordination point for ATP. The stretch at 809 to 883 (LADLLNVEEE…RIDEMKKLVK (75 aa)) forms a coiled coil.

This sequence belongs to the class-I aminoacyl-tRNA synthetase family. ValS type 1 subfamily. In terms of assembly, monomer.

Its subcellular location is the cytoplasm. The enzyme catalyses tRNA(Val) + L-valine + ATP = L-valyl-tRNA(Val) + AMP + diphosphate. Its function is as follows. Catalyzes the attachment of valine to tRNA(Val). As ValRS can inadvertently accommodate and process structurally similar amino acids such as threonine, to avoid such errors, it has a 'posttransfer' editing activity that hydrolyzes mischarged Thr-tRNA(Val) in a tRNA-dependent manner. The sequence is that of Valine--tRNA ligase from Streptococcus pneumoniae serotype 4 (strain ATCC BAA-334 / TIGR4).